The chain runs to 133 residues: Protransforming growth factor alpha (133 aa).

An N-terminal signal peptide occupies residues 1–23; it reads MVPSAGQLALFALGIFLAVCQAL. A propeptide spans 24–38 (removed in mature form); it reads ENSTSALSDPPVAAA. Over 24-97 the chain is Extracellular; sequence ENSTSALSDP…AVVAASQKKQ (74 aa). Asn-25 is a glycosylation site (N-linked (GlcNAc...) asparagine). In terms of domain architecture, EGF-like spans 42–82; that stretch reads HFNDCPDSHTQFCFHGTCRFLLQEEKPACVCHSGYVGARCE. Cystine bridges form between Cys-46–Cys-59, Cys-54–Cys-70, and Cys-72–Cys-81. Residues 89 to 133 constitute a propeptide, removed in mature form; sequence VVAASQKKQAITALVVVTIVALAVLIITCVLIHCCEVRKHSVVVP. The helical transmembrane segment at 98–120 threads the bilayer; that stretch reads AITALVVVTIVALAVLIITCVLI. The Cytoplasmic segment spans residues 121 to 133; that stretch reads HCCEVRKHSVVVP.

As to quaternary structure, interacts with the PDZ domains of MAGI3, SDCBP and SNTA1. The interaction with SDCBP, is required for the targeting to the cell surface. In the endoplasmic reticulum, in its immature form (i.e. with a prosegment and lacking full N-glycosylation), interacts with CNIH. In the Golgi apparatus, may form a complex with CNIH and GORASP2. Interacts (via cytoplasmic C-terminal domain) with NKD2. Skin.

The protein localises to the secreted. It localises to the extracellular space. It is found in the cell membrane. In terms of biological role, TGF alpha is a mitogenic polypeptide that is able to bind to the EGF receptor/EGFR and to act synergistically with TGF beta to promote anchorage-independent cell proliferation in soft agar. In Ovis aries (Sheep), this protein is Protransforming growth factor alpha (TGFA).